We begin with the raw amino-acid sequence, 202 residues long: Holliday junction branch migration complex subunit RuvA (202 aa).

The domain I stretch occupies residues 1 to 64 (MIGRLRGSLA…EDAHLLYGFY (64 aa)). A domain II region spans residues 65–143 (EKRERELFRE…AWEALPGTFT (79 aa)). The segment at 144 to 153 (LVSNGPNQAE) is flexible linker. Positions 154-202 (PVASAESDAVSALISLGYKPQEASKAVSAIKEKDLSSADLIRRALKGMG) are domain III.

The protein belongs to the RuvA family. As to quaternary structure, homotetramer. Forms an RuvA(8)-RuvB(12)-Holliday junction (HJ) complex. HJ DNA is sandwiched between 2 RuvA tetramers; dsDNA enters through RuvA and exits via RuvB. An RuvB hexamer assembles on each DNA strand where it exits the tetramer. Each RuvB hexamer is contacted by two RuvA subunits (via domain III) on 2 adjacent RuvB subunits; this complex drives branch migration. In the full resolvosome a probable DNA-RuvA(4)-RuvB(12)-RuvC(2) complex forms which resolves the HJ.

The protein resides in the cytoplasm. Functionally, the RuvA-RuvB-RuvC complex processes Holliday junction (HJ) DNA during genetic recombination and DNA repair, while the RuvA-RuvB complex plays an important role in the rescue of blocked DNA replication forks via replication fork reversal (RFR). RuvA specifically binds to HJ cruciform DNA, conferring on it an open structure. The RuvB hexamer acts as an ATP-dependent pump, pulling dsDNA into and through the RuvAB complex. HJ branch migration allows RuvC to scan DNA until it finds its consensus sequence, where it cleaves and resolves the cruciform DNA. The protein is Holliday junction branch migration complex subunit RuvA of Pseudomonas syringae pv. syringae (strain B728a).